Here is a 196-residue protein sequence, read N- to C-terminus: Imidazole glycerol phosphate synthase subunit HisH (196 aa).

The Glutamine amidotransferase type-1 domain maps to 2 to 196 (DVVILDTGCA…AQLMKNFLEM (195 aa)). C77 acts as the Nucleophile in catalysis. Active-site residues include H178 and E180.

As to quaternary structure, heterodimer of HisH and HisF.

The protein resides in the cytoplasm. The catalysed reaction is 5-[(5-phospho-1-deoxy-D-ribulos-1-ylimino)methylamino]-1-(5-phospho-beta-D-ribosyl)imidazole-4-carboxamide + L-glutamine = D-erythro-1-(imidazol-4-yl)glycerol 3-phosphate + 5-amino-1-(5-phospho-beta-D-ribosyl)imidazole-4-carboxamide + L-glutamate + H(+). It catalyses the reaction L-glutamine + H2O = L-glutamate + NH4(+). It participates in amino-acid biosynthesis; L-histidine biosynthesis; L-histidine from 5-phospho-alpha-D-ribose 1-diphosphate: step 5/9. Functionally, IGPS catalyzes the conversion of PRFAR and glutamine to IGP, AICAR and glutamate. The HisH subunit catalyzes the hydrolysis of glutamine to glutamate and ammonia as part of the synthesis of IGP and AICAR. The resulting ammonia molecule is channeled to the active site of HisF. This Yersinia pestis protein is Imidazole glycerol phosphate synthase subunit HisH.